Reading from the N-terminus, the 702-residue chain is Protein sepa-1 (702 aa).

Positions 39 to 160 are required for self-association and interaction with pgl-3; that stretch reads RQRFCYEKTD…KESTSYGQFR (122 aa). Short sequence motifs (LIR) lie at residues 107–110, 247–250, and 298–301; these read FVEV, FQKI, and FGFV. A disordered region spans residues 450–471; sequence AKDPEEPTTAASEGGNTYGYQE. Residues 458-468 show a composition bias toward polar residues; the sequence is TAASEGGNTYG. Residues 469 to 472 carry the LIR 4 motif; sequence YQEL. Residues 508–543 adopt a coiled-coil conformation; sequence AAMDKKKKRRELKSRLNKINAQIDELEKRRMERAGK. Positions 545–564 are disordered; it reads QVVSSSVPSEEAAQVEAPAS. A KIX domain is found at 597-674; it reads NTSKEWIVED…TVDQILKKTL (78 aa). Basic and acidic residues predominate over residues 675–685; sequence KKDQRATEHNH. The disordered stretch occupies residues 675–702; that stretch reads KKDQRATEHNHQQPTQSSDELAKNHEKN.

In terms of assembly, self-associates. Interacts (via the LIR motifs) with lgg-1; the interaction is direct. Interacts (via the LIR motifs) with lgg-2; the interaction is direct. Interacts with pgl-3; interaction is enhanced in the presence of RNA. Interacts with epg-2; may be modulated by prmt-1. In terms of processing, degraded by autophagy.

The protein resides in the nucleus. The protein localises to the cytoplasm. It is found in the cytoplasmic granule. Its function is as follows. Adapter protein that connects P-granules in somatic cells with the autophagic machinery. Association with other adapters such as epg-2 and P-granule components such as pgl-3 is required for the accumulation and degradation of P-granules by autophagy in somatic cells. This ensures exclusive localization of the P-granules in germ cells. This chain is Protein sepa-1, found in Caenorhabditis elegans.